A 57-amino-acid chain; its full sequence is Granulin-1 (57 aa).

2 cysteine pairs are disulfide-bonded: Cys4–Cys16 and Cys10–Cys26.

It belongs to the granulin family. In terms of processing, granulins are disulfide bridged. Ubiquitous.

Its subcellular location is the secreted. In terms of biological role, granulins have possible cytokine-like activity. They may play a role in inflammation, wound repair, and tissue remodeling. The chain is Granulin-1 from Cyprinus carpio (Common carp).